The chain runs to 825 residues: Endoglucanase C (825 aa).

The signal sequence occupies residues 1–28 (MRNKLRRLLAIMMAVLLITSLFAPMVSA). Glu219 functions as the Proton donor in the catalytic mechanism. Glu335 serves as the catalytic Nucleophile. Basic and acidic residues predominate over residues 607-621 (DRESVPEPVEHDTKG). Residues 607-635 (DRESVPEPVEHDTKGDSALPSDFEDGTRQ) form a disordered region.

The protein belongs to the glycosyl hydrolase 5 (cellulase A) family.

It carries out the reaction Endohydrolysis of (1-&gt;4)-beta-D-glucosidic linkages in cellulose, lichenin and cereal beta-D-glucans.. The sequence is that of Endoglucanase C (celC) from Evansella cellulosilytica (strain ATCC 21833 / DSM 2522 / FERM P-1141 / JCM 9156 / N-4) (Bacillus cellulosilyticus).